The chain runs to 87 residues: Neutrophil antibiotic peptide NP-3B (87 aa).

The signal sequence occupies residues 1-19 (MRTLILLTTLLLLALHTQA). A propeptide spanning residues 20-58 (ESPQGSTKEAPDEEQDISVFFGGDKGTALQDAAVKAGVT) is cleaved from the precursor. 3 disulfides stabilise this stretch: Cys-59–Cys-87, Cys-61–Cys-76, and Cys-66–Cys-86.

Belongs to the alpha-defensin family.

Its subcellular location is the secreted. In terms of biological role, active in vitro against S.aureus, fungi, Gram-positive and Gram-negative bacteria and to a lesser extent against an enveloped virus. This is Neutrophil antibiotic peptide NP-3B from Rattus norvegicus (Rat).